Here is a 62-residue protein sequence, read N- to C-terminus: UPF0434 protein Avi_4243 (62 aa).

This sequence belongs to the UPF0434 family.

The chain is UPF0434 protein Avi_4243 from Allorhizobium ampelinum (strain ATCC BAA-846 / DSM 112012 / S4) (Agrobacterium vitis (strain S4)).